Reading from the N-terminus, the 617-residue chain is Protein 4.1 (617 aa).

Residues 1–282 (MHCKVSLLDD…EHHTFFRLTS (282 aa)) enclose the FERM domain. Position 13 is a phosphotyrosine (Tyr-13). Thr-169 carries the post-translational modification Phosphothreonine. The tract at residues 308–401 (TRQASALIDR…AEPEPSEAWK (94 aa)) is disordered. Phosphoserine occurs at positions 312, 331, and 333. The span at 348–361 (RPTSAPAIAPSPAA) shows a compositional bias: low complexity. Acidic residues predominate over residues 387–396 (APPEDAEPEP). Residues 401-466 (KKKRERLDGE…WDKRLSTHSP (66 aa)) are spectrin--actin-binding. At Tyr-413 the chain carries Phosphotyrosine; by EGFR. Phosphoserine is present on residues Ser-417, Ser-427, Ser-437, and Ser-462. Ser-465 bears the Phosphoserine; by CDK1 mark. Residues 467-617 (FRTLNINGQI…VHQETEISEE (151 aa)) form a C-terminal (CTD) region. Phosphothreonine occurs at positions 489 and 612.

As to quaternary structure, binds with a high affinity to glycophorin and with lower affinity to band III protein. Associates with the nuclear mitotic apparatus. Binds calmodulin, CPAP and DLG1. Also found to associate with contractile apparatus and tight junctions. Interacts with NUMA1; this interaction is negatively regulated by CDK1 during metaphase and promotes anaphase-specific localization of NUMA1 in symmetrically dividing cells. Interacts with ATP2B1; regulates small intestinal calcium absorption through regulation of membrane expression of ATP2B1. Post-translationally, phosphorylated at multiple sites by different protein kinases and each phosphorylation event selectively modulates the protein's functions. Phosphorylation on Tyr-413 reduces the ability of 4.1 to promote the assembly of the spectrin/actin/4.1 ternary complex.

It is found in the nucleus. It localises to the cytoplasm. The protein resides in the cytoskeleton. The protein localises to the cell cortex. Protein 4.1 is a major structural element of the erythrocyte membrane skeleton. It plays a key role in regulating membrane physical properties of mechanical stability and deformability by stabilizing spectrin-actin interaction. Recruits DLG1 to membranes. Required for dynein-dynactin complex and NUMA1 recruitment at the mitotic cell cortex during anaphase. This Bos taurus (Bovine) protein is Protein 4.1.